A 961-amino-acid chain; its full sequence is FYVE, RhoGEF and PH domain-containing protein 1 (961 aa).

Gly residues predominate over residues 1 to 11; sequence MHGHRAPGGAG. Positions 1–353 are disordered; the sequence is MHGHRAPGGA…DEEEEEEKDR (353 aa). Over residues 27-38 the composition is skewed to low complexity; the sequence is PPACADSDPGAS. Position 48 is a phosphoserine (serine 48). Residues 125–135 are compositionally biased toward basic and acidic residues; that stretch reads PHPEGPQRLRS. Pro residues-rich tracts occupy residues 156–165 and 172–190; these read GPKPQVPPKP and RMPPPLEPIPPPPSRPLPA. The short motif at 171–187 is the SH3-binding element; sequence PRMPPPLEPIPPPPSRP. A compositionally biased stretch (low complexity) spans 199-213; the sequence is APRAEASPSSAAVSS. Position 205 is a phosphoserine (serine 205). Over residues 231–255 the composition is skewed to pro residues; that stretch reads VPGPSPGPPEPVMLPQPTSQPPVPQ. The segment covering 273-284 has biased composition (basic and acidic residues); the sequence is RDGEKVPNRDSG. Composition is skewed to low complexity over residues 285 to 294 and 316 to 325; these read IDSISSPSNS and ALASVPVALA. The segment covering 335-351 has biased composition (acidic residues); the sequence is VDSDLEEEDDEEEEEEK. Residues 373-561 form the DH domain; the sequence is KVFHIANELL…ATAAEHSNAA (189 aa). The PH 1 domain maps to 590-689; sequence ELIKEGHILK…WVQAINSTLL (100 aa). Residues 702-726 are disordered; the sequence is NSTNREDEDTPPNSPNVDLGKRAPT. Position 711 is a phosphothreonine (threonine 711). Serine 715 is modified (phosphoserine). The segment at 730–790 adopts an FYVE-type zinc-finger fold; sequence EKEVTMCMRC…VCTDCYVALH (61 aa). Residues cysteine 736, cysteine 739, cysteine 753, cysteine 756, cysteine 761, cysteine 764, cysteine 782, and cysteine 785 each contribute to the Zn(2+) site. The region spanning 821–921 is the PH 2 domain; sequence NSVICSFLHY…WMAVLGRAGR (101 aa). The segment at 925–961 is disordered; the sequence is FCPGPTLSEDREMEEAPVAALGATAEPPESPQTRDKT.

Interacts with DBNL/ABP1 and CTTN. May interact with CCPG1. Binds CDC42. In terms of tissue distribution, expressed in fetal heart, brain, lung, kidney and placenta. Less expressed in liver; adult heart, brain, lung, pancreas and skeletal muscle.

Its subcellular location is the cytoplasm. It localises to the cell projection. The protein resides in the lamellipodium. The protein localises to the ruffle. It is found in the cytoskeleton. Its function is as follows. Activates CDC42, a member of the Ras-like family of Rho- and Rac proteins, by exchanging bound GDP for free GTP. Plays a role in regulating the actin cytoskeleton and cell shape. The sequence is that of FYVE, RhoGEF and PH domain-containing protein 1 (FGD1) from Homo sapiens (Human).